A 901-amino-acid chain; its full sequence is Alanine--tRNA ligase (901 aa).

Residues H600, H604, C704, and H708 each contribute to the Zn(2+) site.

It belongs to the class-II aminoacyl-tRNA synthetase family. Zn(2+) is required as a cofactor.

The protein resides in the cytoplasm. It catalyses the reaction tRNA(Ala) + L-alanine + ATP = L-alanyl-tRNA(Ala) + AMP + diphosphate. In terms of biological role, catalyzes the attachment of alanine to tRNA(Ala) in a two-step reaction: alanine is first activated by ATP to form Ala-AMP and then transferred to the acceptor end of tRNA(Ala). Also edits incorrectly charged Ser-tRNA(Ala) and Gly-tRNA(Ala) via its editing domain. The polypeptide is Alanine--tRNA ligase (Ignicoccus hospitalis (strain KIN4/I / DSM 18386 / JCM 14125)).